The following is a 428-amino-acid chain: Aerobic C4-dicarboxylate transport protein (428 aa).

8 helical membrane-spanning segments follow: residues 5–27 (LFKSLYFQVLTAIAIGILLGHFY), 47–64 (MIIAPVIFCTVVTGIAGM), 77–99 (ALLYFEIVSTIALIIGLIIVNVV), 141–163 (VIGAFASGNILQVLLFAVLFGFA), 184–206 (VIFGIINMIMRLAPIGAFGAMAF), 219–241 (LGQLIICFYITCILFVVLVLGSI), 326–348 (IVHQITLLIVLLLSSKGAAGVTG), and 352–374 (IVLAATLSAVGHLPVAGLALILG).

The protein belongs to the dicarboxylate/amino acid:cation symporter (DAACS) (TC 2.A.23) family.

It is found in the cell inner membrane. Responsible for the aerobic transport of the dicarboxylates fumarate and malate and to a lesser extent succinate, from the periplasm across the inner membrane. This is Aerobic C4-dicarboxylate transport protein from Escherichia coli O157:H7.